The sequence spans 269 residues: Oligoribonuclease, mitochondrial (269 aa).

Residues 55–227 enclose the Exonuclease domain; sequence LVWIDCEMTG…SDIKESIAQL (173 aa). Tyr-184 is a catalytic residue. Residues 240–269 form a disordered region; it reads ETESVESIGSEQPESPSSSTSSLKRQRTDF. The segment covering 245-261 has biased composition (low complexity); it reads ESIGSEQPESPSSSTSS.

This sequence belongs to the oligoribonuclease family.

It is found in the mitochondrion. Functionally, 3'-to-5' exoribonuclease specific for small oligoribonucleotides. This is Oligoribonuclease, mitochondrial (REX2) from Saccharomyces cerevisiae (strain ATCC 204508 / S288c) (Baker's yeast).